Here is a 316-residue protein sequence, read N- to C-terminus: ATP synthase gamma chain (316 aa).

This sequence belongs to the ATPase gamma chain family. In terms of assembly, F-type ATPases have 2 components, CF(1) - the catalytic core - and CF(0) - the membrane proton channel. CF(1) has five subunits: alpha(3), beta(3), gamma(1), delta(1), epsilon(1). CF(0) has three main subunits: a, b and c.

It localises to the cellular thylakoid membrane. Produces ATP from ADP in the presence of a proton gradient across the membrane. The gamma chain is believed to be important in regulating ATPase activity and the flow of protons through the CF(0) complex. This chain is ATP synthase gamma chain, found in Prochlorococcus marinus (strain MIT 9303).